The sequence spans 31 residues: MLTLTSYFGFLLAALTITSALFIGLSKIRLI.

The helical transmembrane segment at 4-26 (LTSYFGFLLAALTITSALFIGLS) threads the bilayer.

This sequence belongs to the PetL family. The 4 large subunits of the cytochrome b6-f complex are cytochrome b6, subunit IV (17 kDa polypeptide, PetD), cytochrome f and the Rieske protein, while the 4 small subunits are PetG, PetL, PetM and PetN. The complex functions as a dimer.

The protein resides in the plastid. It localises to the chloroplast thylakoid membrane. In terms of biological role, component of the cytochrome b6-f complex, which mediates electron transfer between photosystem II (PSII) and photosystem I (PSI), cyclic electron flow around PSI, and state transitions. PetL is important for photoautotrophic growth as well as for electron transfer efficiency and stability of the cytochrome b6-f complex. The protein is Cytochrome b6-f complex subunit 6 of Aethionema grandiflorum (Persian stone-cress).